The sequence spans 343 residues: 4-hydroxy-2-oxovalerate aldolase (343 aa).

The 252-residue stretch at I5–L256 folds into the Pyruvate carboxyltransferase domain. R13–D14 serves as a coordination point for substrate. Residue D14 coordinates Mn(2+). Residue H17 is the Proton acceptor of the active site. The substrate site is built by S168 and H195. Positions 195 and 197 each coordinate Mn(2+).

It belongs to the 4-hydroxy-2-oxovalerate aldolase family. Interacts with MhpF.

It catalyses the reaction (S)-4-hydroxy-2-oxopentanoate = acetaldehyde + pyruvate. It participates in aromatic compound metabolism; 3-phenylpropanoate degradation. Functionally, catalyzes the retro-aldol cleavage of 4-hydroxy-2-oxopentanoate to pyruvate and acetaldehyde. Is involved in the meta-cleavage pathway for the degradation of aromatic compounds. In Pectobacterium atrosepticum (strain SCRI 1043 / ATCC BAA-672) (Erwinia carotovora subsp. atroseptica), this protein is 4-hydroxy-2-oxovalerate aldolase.